Reading from the N-terminus, the 241-residue chain is Probable histone-lysine N-methyltransferase set-23 (241 aa).

The Pre-SET domain maps to 25-85 (QGCDCETQCS…SCRNKVVQNG (61 aa)). Positions 27, 29, 33, 39, 41, 64, 68, 70, and 77 each coordinate Zn(2+). The SET domain occupies 88-210 (KKLKIFSTSE…VGEELSYDYG (123 aa)). S-adenosyl-L-methionine is bound by residues 98–100 (KGD), Asp-138, Tyr-140, Arg-167, and 170–171 (NH). Positions 173, 222, 224, and 229 each coordinate Zn(2+). The 17-residue stretch at 218–234 (NRKLCLCRSENCRKYLP) folds into the Post-SET domain.

Belongs to the class V-like SAM-binding methyltransferase superfamily. Histone-lysine methyltransferase family. Suvar3-9 subfamily.

The protein localises to the nucleus. Its subcellular location is the chromosome. The catalysed reaction is L-lysyl-[histone] + S-adenosyl-L-methionine = N(6)-methyl-L-lysyl-[histone] + S-adenosyl-L-homocysteine + H(+). Probable histone methyltransferase required for embryonic development. This chain is Probable histone-lysine N-methyltransferase set-23, found in Caenorhabditis briggsae.